The primary structure comprises 322 residues: Deoxycytidylate deaminase (322 aa).

Residues 173-311 (SWDSYFMEMA…SLLQAAGVQL (139 aa)) enclose the CMP/dCMP-type deaminase domain. Position 246 (His-246) interacts with Zn(2+). Glu-248 (proton donor) is an active-site residue. Zn(2+) is bound by residues Cys-273 and Cys-276.

The protein belongs to the cytidine and deoxycytidylate deaminase family. Requires Zn(2+) as cofactor.

It is found in the cytoplasm. The protein localises to the nucleus. The catalysed reaction is dCMP + H2O + H(+) = dUMP + NH4(+). Supplies the nucleotide substrate for thymidylate synthetase. This chain is Deoxycytidylate deaminase, found in Schizosaccharomyces pombe (strain 972 / ATCC 24843) (Fission yeast).